The primary structure comprises 714 residues: Rho-GTPase-activating protein RGD2 (714 aa).

An F-BAR domain is found at 2 to 441 (LSFCDYFWSE…LENDIDPTAD (440 aa)). A DEP domain is found at 218–298 (PKTDYKLPLI…WKNTAYMFAN (81 aa)). Residues 475–704 (VDLETRCRLD…DLLTHKKQIF (230 aa)) form the Rho-GAP domain.

Interacts with CDC42 and RHO5.

In terms of biological role, acts in signal transduction. Activates CDC42 and RHO5. The chain is Rho-GTPase-activating protein RGD2 (RGD2) from Saccharomyces cerevisiae (strain ATCC 204508 / S288c) (Baker's yeast).